The primary structure comprises 705 residues: Tryptophan synthase (705 aa).

Positions 1–293 are tryptophan synthase alpha chain; that stretch reads MEAIKKVFEQ…QLTPNAETAK (293 aa). Active-site proton acceptor residues include Glu-49 and Asp-60. The tract at residues 266–287 is disordered; it reads KGEPSRVRSPGAAQRTPSQLTP. A tryptophan synthase beta chain region spans residues 294 to 705; the sequence is GVENILPARF…HVSSNAIPSK (412 aa). Lys-381 is modified (N6-(pyridoxal phosphate)lysine).

In the N-terminal section; belongs to the TrpA family. It in the C-terminal section; belongs to the TrpB family. The cofactor is pyridoxal 5'-phosphate.

It catalyses the reaction (1S,2R)-1-C-(indol-3-yl)glycerol 3-phosphate + L-serine = D-glyceraldehyde 3-phosphate + L-tryptophan + H2O. Its pathway is amino-acid biosynthesis; L-tryptophan biosynthesis; L-tryptophan from chorismate: step 5/5. This Coprinopsis cinerea (Inky cap fungus) protein is Tryptophan synthase (TRP-1).